We begin with the raw amino-acid sequence, 301 residues long: Probable alpha-L-glutamate ligase 2 (301 aa).

The 184-residue stretch at 104-287 (MQLLSRKGIG…VASMIIEFIV (184 aa)) folds into the ATP-grasp domain. ATP-binding positions include Lys-141, 178–179 (EY), Asp-187, and 211–213 (RSN). Residues Asp-248, Glu-260, and Asn-262 each contribute to the Mg(2+) site. Mn(2+)-binding residues include Asp-248, Glu-260, and Asn-262.

It belongs to the RimK family. It depends on Mg(2+) as a cofactor. Requires Mn(2+) as cofactor.

The sequence is that of Probable alpha-L-glutamate ligase 2 from Pseudoalteromonas atlantica (strain T6c / ATCC BAA-1087).